A 233-amino-acid chain; its full sequence is Orotidine 5'-phosphate decarboxylase (233 aa).

Substrate contacts are provided by residues Asp11, Lys34, 61–70 (DLKLHDIPNT), Thr117, Arg179, Gln188, Gly208, and Arg209. Residue Lys63 is the Proton donor of the active site.

The protein belongs to the OMP decarboxylase family. Type 1 subfamily. In terms of assembly, homodimer.

It carries out the reaction orotidine 5'-phosphate + H(+) = UMP + CO2. It participates in pyrimidine metabolism; UMP biosynthesis via de novo pathway; UMP from orotate: step 2/2. Its function is as follows. Catalyzes the decarboxylation of orotidine 5'-monophosphate (OMP) to uridine 5'-monophosphate (UMP). In Streptococcus pneumoniae (strain CGSP14), this protein is Orotidine 5'-phosphate decarboxylase.